We begin with the raw amino-acid sequence, 283 residues long: 5'-nucleotidase SurE 2 (283 aa).

Positions 19, 20, 52, and 110 each coordinate a divalent metal cation.

Belongs to the SurE nucleotidase family. A divalent metal cation serves as cofactor.

The protein resides in the cytoplasm. It catalyses the reaction a ribonucleoside 5'-phosphate + H2O = a ribonucleoside + phosphate. In terms of biological role, nucleotidase that shows phosphatase activity on nucleoside 5'-monophosphates. This Chlamydia caviae (strain ATCC VR-813 / DSM 19441 / 03DC25 / GPIC) (Chlamydophila caviae) protein is 5'-nucleotidase SurE 2.